The chain runs to 353 residues: Mannonate dehydratase (353 aa).

The protein belongs to the mannonate dehydratase family. Fe(2+) serves as cofactor. It depends on Mn(2+) as a cofactor.

The enzyme catalyses D-mannonate = 2-dehydro-3-deoxy-D-gluconate + H2O. It participates in carbohydrate metabolism; pentose and glucuronate interconversion. Its function is as follows. Catalyzes the dehydration of D-mannonate. The chain is Mannonate dehydratase from Burkholderia cenocepacia (strain ATCC BAA-245 / DSM 16553 / LMG 16656 / NCTC 13227 / J2315 / CF5610) (Burkholderia cepacia (strain J2315)).